The primary structure comprises 265 residues: Glutamate racemase (265 aa).

Residues 12 to 13 (DS) and 44 to 45 (YG) each bind substrate. Residue cysteine 75 is the Proton donor/acceptor of the active site. 76-77 (NT) is a binding site for substrate. Cysteine 183 functions as the Proton donor/acceptor in the catalytic mechanism. A substrate-binding site is contributed by 184-185 (TH).

This sequence belongs to the aspartate/glutamate racemases family.

It carries out the reaction L-glutamate = D-glutamate. The protein operates within cell wall biogenesis; peptidoglycan biosynthesis. In terms of biological role, provides the (R)-glutamate required for cell wall biosynthesis. The sequence is that of Glutamate racemase from Carboxydothermus hydrogenoformans (strain ATCC BAA-161 / DSM 6008 / Z-2901).